The sequence spans 199 residues: 3-isopropylmalate dehydratase small subunit (199 aa).

This sequence belongs to the LeuD family. LeuD type 1 subfamily. As to quaternary structure, heterodimer of LeuC and LeuD.

It carries out the reaction (2R,3S)-3-isopropylmalate = (2S)-2-isopropylmalate. It functions in the pathway amino-acid biosynthesis; L-leucine biosynthesis; L-leucine from 3-methyl-2-oxobutanoate: step 2/4. Catalyzes the isomerization between 2-isopropylmalate and 3-isopropylmalate, via the formation of 2-isopropylmaleate. This Leifsonia xyli subsp. xyli (strain CTCB07) protein is 3-isopropylmalate dehydratase small subunit.